A 574-amino-acid polypeptide reads, in one-letter code: MSRRLIYVLNINRKSTHKIQENEIYTYFSYCNIDHTSTELDFVVKNYDLNRRQPVTGYTALHCYLYNNYFTNDVLKVLLNHGVDVTIKPSSGHMPIYILLTRCCNISHNVVIDMINKDKTHLSHKDYSNLLLEYIKSRYMLLKEEDIDENIVSTLLDKGIDPNFKQDGYTALHYYYLCLAHVYKPGECRKPITIKKAKRIISLFIQHGANLNALDNCGNTPFHLYLSIEMCNNIHMTKMLLTFNPNFEICNNHGLTPILCYITSDYIQHDILVMLIHHYETNVGEMPIDERRMIVFEFIKTYSTRPLDSITYLMNRFKNIDIHTRYEGKTLLHIACEYNNTHVIDYLIRINGDINALTDNNKHAIQLIIDNKENSQYTIDCLLYILRYIVDKNVIRSLVDQLPYLPIFDIKSFEKFISYCILLDDTFYDRHVQNRDSKTYRYTFSKYISFDKYDSIITKCYEETILLKLSTVLDTTLYSVLRCHNSRKLKRYLSVLKKYNNDKSFKIYSNIMNERYLNVYYKDMYVSKVYDKLFPVFTDKKCLLTLLPSEIIYEILYMLTIYDLYNISYPPTKV.

ANK repeat units follow at residues 56 to 87 (TGYT…DVTI), 135 to 164 (IKSR…DPNF), 167 to 213 (DGYT…NLNA), 217 to 249 (CGNT…NFEI), 253 to 285 (HGLT…NVGE), and 327 to 356 (EGKT…DINA). The F-box domain occupies 541–574 (KCLLTLLPSEIIYEILYMLTIYDLYNISYPPTKV).

The chain is Ankyrin repeat protein B18 from Variola virus (isolate Human/India/Ind3/1967) (VARV).